The following is a 123-amino-acid chain: Small ribosomal subunit protein uS12 (123 aa).

3-methylthioaspartic acid is present on D89.

This sequence belongs to the universal ribosomal protein uS12 family. As to quaternary structure, part of the 30S ribosomal subunit. Contacts proteins S8 and S17. May interact with IF1 in the 30S initiation complex.

Its function is as follows. With S4 and S5 plays an important role in translational accuracy. Interacts with and stabilizes bases of the 16S rRNA that are involved in tRNA selection in the A site and with the mRNA backbone. Located at the interface of the 30S and 50S subunits, it traverses the body of the 30S subunit contacting proteins on the other side and probably holding the rRNA structure together. The combined cluster of proteins S8, S12 and S17 appears to hold together the shoulder and platform of the 30S subunit. In Caulobacter sp. (strain K31), this protein is Small ribosomal subunit protein uS12.